Here is a 130-residue protein sequence, read N- to C-terminus: MYSGICIYMFLAMLSTSSSGQQATGSHNENPVATELEQSLTEHHRHVRVPSSAGQLKPIQRLDGNVDQKANIGALLAKYLQQARKGPTGRISMMGNRVQNIDPTHRINDRDYMGWMDFGRRSAEEYEYSS.

The N-terminal stretch at 1–20 (MYSGICIYMFLAMLSTSSSG) is a signal peptide. Residues 21-60 (QQATGSHNENPVATELEQSLTEHHRHVRVPSSAGQLKPIQ) constitute a propeptide that is removed on maturation. The residue at position 112 (Y112) is a Sulfotyrosine. F118 carries the post-translational modification Phenylalanine amide. A propeptide spanning residues 122–130 (SAEEYEYSS) is cleaved from the precursor. 2 positions are modified to sulfotyrosine: Y126 and Y128.

This sequence belongs to the gastrin/cholecystokinin family. The precursor is cleaved by proteases to produce a number of active cholecystokinins. In terms of tissue distribution, expressed in brain, duodenum and small intestine.

The protein resides in the secreted. In terms of biological role, this peptide hormone induces gall bladder contraction and the release of pancreatic enzymes in the gut. Its function in the brain is not clear. The polypeptide is Cholecystokinin (Trachemys scripta (Red-eared slider turtle)).